Reading from the N-terminus, the 90-residue chain is Acylphosphatase (90 aa).

Residues 3-90 (RYSAIVQGRV…DGEKKFSIKY (88 aa)) form the Acylphosphatase-like domain. Active-site residues include Arg-18 and Asn-36.

It belongs to the acylphosphatase family.

It catalyses the reaction an acyl phosphate + H2O = a carboxylate + phosphate + H(+). This Clostridium beijerinckii (strain ATCC 51743 / NCIMB 8052) (Clostridium acetobutylicum) protein is Acylphosphatase (acyP).